We begin with the raw amino-acid sequence, 671 residues long: UvrABC system protein B (671 aa).

The region spanning 25 to 412 (EGIDAGLAHQ…AGRIVEQVVR (388 aa)) is the Helicase ATP-binding domain. 38–45 (GVTGSGKT) provides a ligand contact to ATP. Residues 91–114 (YYDYYQPEAYVPSSDTFIEKDASI) carry the Beta-hairpin motif. A Helicase C-terminal domain is found at 429 to 582 (QVDDLLSEIH…QIAFNLEHGI (154 aa)). Positions 601–625 (PGSRSKKRKGMAKAAEESARYENEL) are disordered. Positions 614–625 (AAEESARYENEL) are enriched in basic and acidic residues. In terms of domain architecture, UVR spans 632-667 (NKRIRQLEEKMYQLARDLEFEAAAQMRDEIGKLRER).

The protein belongs to the UvrB family. As to quaternary structure, forms a heterotetramer with UvrA during the search for lesions. Interacts with UvrC in an incision complex.

Its subcellular location is the cytoplasm. Its function is as follows. The UvrABC repair system catalyzes the recognition and processing of DNA lesions. A damage recognition complex composed of 2 UvrA and 2 UvrB subunits scans DNA for abnormalities. Upon binding of the UvrA(2)B(2) complex to a putative damaged site, the DNA wraps around one UvrB monomer. DNA wrap is dependent on ATP binding by UvrB and probably causes local melting of the DNA helix, facilitating insertion of UvrB beta-hairpin between the DNA strands. Then UvrB probes one DNA strand for the presence of a lesion. If a lesion is found the UvrA subunits dissociate and the UvrB-DNA preincision complex is formed. This complex is subsequently bound by UvrC and the second UvrB is released. If no lesion is found, the DNA wraps around the other UvrB subunit that will check the other stand for damage. The sequence is that of UvrABC system protein B from Pseudomonas syringae pv. tomato (strain ATCC BAA-871 / DC3000).